The sequence spans 226 residues: V-type proton ATPase subunit E (226 aa).

It belongs to the V-ATPase E subunit family. As to quaternary structure, V-ATPase is a heteromultimeric enzyme made up of two complexes: the ATP-hydrolytic V1 complex and the proton translocation V0 complex. The V1 complex consists of three catalytic AB heterodimers that form a heterohexamer, three peripheral stalks each consisting of EG heterodimers, one central rotor including subunits D and F, and the regulatory subunits C and H. The proton translocation complex V0 consists of the proton transport subunit a, a ring of proteolipid subunits c9c'', rotary subunit d, subunits e and f, and the accessory subunits VhaAC45 and ATP6AP2.

In terms of biological role, subunit of the V1 complex of vacuolar(H+)-ATPase (V-ATPase), a multisubunit enzyme composed of a peripheral complex (V1) that hydrolyzes ATP and a membrane integral complex (V0) that translocates protons. V-ATPase is responsible for acidifying and maintaining the pH of intracellular compartments and in some cell types, is targeted to the plasma membrane, where it is responsible for acidifying the extracellular environment. This chain is V-type proton ATPase subunit E (Vha26), found in Drosophila melanogaster (Fruit fly).